A 446-amino-acid polypeptide reads, in one-letter code: Divalent metal cation transporter MntH (446 aa).

The next 11 membrane-spanning stretches (helical) occupy residues 32–52, 59–79, 107–127, 139–159, 168–188, 205–225, 264–284, 303–323, 355–375, 381–401, and 420–440; these read LAFLGPGLLVAVGYMDPGNWI, AQFGYTLLFVILISSLSAMLL, AIIFWVIAELAIIATDIAEVI, IPLIIGALITVFDVFLLLFIM, AIVGTLIFTVLMIFVFEVYIS, IIANHSILYIALGIIGATIMP, SIAFIVNCLLLVLGAALFYGV, PVLGVVMGSIMSTLFAIALLA, LVTRSLAVIPVLLCLVIFRGN, QLLVFSQVFLSIALPFSLIPL, and VNICAWGLIIILSFLNIYLII.

This sequence belongs to the NRAMP family.

The protein resides in the cell membrane. H(+)-stimulated, divalent metal cation uptake system. The polypeptide is Divalent metal cation transporter MntH (Staphylococcus haemolyticus (strain JCSC1435)).